Here is a 1023-residue protein sequence, read N- to C-terminus: NRPS-like oxidoreductase fscA (1023 aa).

The segment at 54–454 (TYGDLNGMAT…NHPFVRQCMV (401 aa)) is adenylation. In terms of domain architecture, Carrier spans 554–637 (PEDDVIGRQI…SIANHVRSAQ (84 aa)). The residue at position 596 (serine 596) is an O-(pantetheine 4'-phosphoryl)serine. The Thioester reductase (TE) domain occupies 685–901 (LTGGAGYLGQ…VYDESTTRAR (217 aa)).

It belongs to the NRP synthetase family. It depends on pantetheine 4'-phosphate as a cofactor.

It functions in the pathway secondary metabolite biosynthesis. Its function is as follows. NRPS-like oxidoreductasee; part of the fragmented gene cluster that mediates the biosynthesis of fusarochromene, a tryptophan-derived metabolite closely related to a group of mycotoxins including fusarochromanone. Within the pathway, fscA acts as an oxidoreductase that reduces the carboxyl group of 4-hydroxykyrunenine to primary alcohol. The first step of the pathway is the epimerization of L-tryptophan to D-tryptophan in the presence of the NRPS-like tryptophan epimerase fscC. D-tryptophan is subsequently hydroxylated by the tryptophan 6-hydroxylase fscE to yield 6-hydroxytryptophan. The pyrrole ring undergoes cleavaged by the tryptophan 2,3-dioxygenase fscD and is finally converted to 4-hydroxykyrunenine by the hydrolase fscH. The NRPS-like oxidoreductase fscA reduces the carboxyl group to primary alcohol and the DMATS-type prenyltransferase fscG performs prenylation, followed by the formation of a chromene ring catalyzed by the oxidoreductase fscI, which leads to desacetylfusarochromene. Epoxidation by fscF and rearrangement reactions of chromene double bonds convert compound desacetylfusarochromene to fusarochromanones. Although specific acetyltransferases were not found near the fsc gene cluster, several predicted enzymes containing the N-acetyltransferase superfamily domain are present in the genome of F.equiseti. These predicted enzymes may have the potential to convert desacetylfusarochromene to fusarochromene. The polypeptide is NRPS-like oxidoreductase fscA (Fusarium equiseti (Fusarium scirpi)).